We begin with the raw amino-acid sequence, 245 residues long: Pyridoxine 5'-phosphate synthase (245 aa).

3-amino-2-oxopropyl phosphate contacts are provided by N8 and R19. The active-site Proton acceptor is H44. Residues R46 and H51 each contribute to the 1-deoxy-D-xylulose 5-phosphate site. E76 serves as the catalytic Proton acceptor. T106 contributes to the 1-deoxy-D-xylulose 5-phosphate binding site. Residue H198 is the Proton donor of the active site. 3-amino-2-oxopropyl phosphate contacts are provided by residues D199 and 221 to 222 (GH).

This sequence belongs to the PNP synthase family. In terms of assembly, homooctamer; tetramer of dimers.

It is found in the cytoplasm. It carries out the reaction 3-amino-2-oxopropyl phosphate + 1-deoxy-D-xylulose 5-phosphate = pyridoxine 5'-phosphate + phosphate + 2 H2O + H(+). It participates in cofactor biosynthesis; pyridoxine 5'-phosphate biosynthesis; pyridoxine 5'-phosphate from D-erythrose 4-phosphate: step 5/5. Its function is as follows. Catalyzes the complicated ring closure reaction between the two acyclic compounds 1-deoxy-D-xylulose-5-phosphate (DXP) and 3-amino-2-oxopropyl phosphate (1-amino-acetone-3-phosphate or AAP) to form pyridoxine 5'-phosphate (PNP) and inorganic phosphate. The protein is Pyridoxine 5'-phosphate synthase of Brucella anthropi (strain ATCC 49188 / DSM 6882 / CCUG 24695 / JCM 21032 / LMG 3331 / NBRC 15819 / NCTC 12168 / Alc 37) (Ochrobactrum anthropi).